A 443-amino-acid polypeptide reads, in one-letter code: Thymidine phosphorylase (443 aa).

Belongs to the thymidine/pyrimidine-nucleoside phosphorylase family. As to quaternary structure, homodimer.

The enzyme catalyses thymidine + phosphate = 2-deoxy-alpha-D-ribose 1-phosphate + thymine. It functions in the pathway pyrimidine metabolism; dTMP biosynthesis via salvage pathway; dTMP from thymine: step 1/2. In terms of biological role, the enzymes which catalyze the reversible phosphorolysis of pyrimidine nucleosides are involved in the degradation of these compounds and in their utilization as carbon and energy sources, or in the rescue of pyrimidine bases for nucleotide synthesis. The chain is Thymidine phosphorylase from Shewanella piezotolerans (strain WP3 / JCM 13877).